A 358-amino-acid polypeptide reads, in one-letter code: MRERLLAAEKVKSIEWHGDRLSLLDQRKLPTEEVWHSCDSAAAVADAIRDMVVRGAPAIGISAAYALVLAARTRMAAGGDWRQALEEDVALLAASRPTAVNLFWALNQMRERLERLKPGEDPCAALEAQAISIHESDREANLAMAQFGVDLIRRHQGNPQNLLTHCNTGALATGGFGTALGVIRAAHLDGLVERVYVDETRPWLQGSRLTAWELLGDGVPATLNVDSAAAHLMKSRGISWVIVGADRITANGDVANKIGTYQLAVLAMHHGVRFMVVAPSSTIDMALESGDEILLEERAGSELLEVNGQRFAAEIEVFNPVFDVTPADLIDAIVTEKGVVERPNAAKMTELMNRKRLH.

Residues 54-56 (RGA), Arg-96, and Gln-205 contribute to the substrate site. Asp-246 acts as the Proton donor in catalysis. Residue 256–257 (NK) coordinates substrate.

This sequence belongs to the eIF-2B alpha/beta/delta subunits family. MtnA subfamily.

The catalysed reaction is 5-(methylsulfanyl)-alpha-D-ribose 1-phosphate = 5-(methylsulfanyl)-D-ribulose 1-phosphate. Its pathway is amino-acid biosynthesis; L-methionine biosynthesis via salvage pathway; L-methionine from S-methyl-5-thio-alpha-D-ribose 1-phosphate: step 1/6. Functionally, catalyzes the interconversion of methylthioribose-1-phosphate (MTR-1-P) into methylthioribulose-1-phosphate (MTRu-1-P). The protein is Methylthioribose-1-phosphate isomerase of Stutzerimonas stutzeri (strain A1501) (Pseudomonas stutzeri).